The primary structure comprises 1385 residues: DNA-directed RNA polymerase subunit beta' (1385 aa).

Zn(2+) is bound by residues Cys-72, Cys-74, Cys-87, and Cys-90. Residues Asp-467, Asp-469, and Asp-471 each contribute to the Mg(2+) site. Cys-829, Cys-910, Cys-917, and Cys-920 together coordinate Zn(2+).

Belongs to the RNA polymerase beta' chain family. As to quaternary structure, the RNAP catalytic core consists of 2 alpha, 1 beta, 1 beta' and 1 omega subunit. When a sigma factor is associated with the core the holoenzyme is formed, which can initiate transcription. Requires Mg(2+) as cofactor. Zn(2+) is required as a cofactor.

It catalyses the reaction RNA(n) + a ribonucleoside 5'-triphosphate = RNA(n+1) + diphosphate. DNA-dependent RNA polymerase catalyzes the transcription of DNA into RNA using the four ribonucleoside triphosphates as substrates. This Elusimicrobium minutum (strain Pei191) protein is DNA-directed RNA polymerase subunit beta'.